Reading from the N-terminus, the 505-residue chain is MSQIIGHISQVIGPVVDVYFEGTDAELMLPSIHDALEIKRPNGKILVVEVQQHIGENTVRTVAMDSTDGLQRGMKVYPTGGPITMPIGEQIKGRLMNVVGDSIDGMKSLDRTGAYSIHRDPPKFEDLTTVQEVLFTGIKVIDLLEPYAKGGKIGLFGGAGVGKTVLIQELINNIAKKHNGFSVFAGVGERTREGNDLLREMIESGVIRYGEAFKESMEKGDWDLSKVDYNELEKSQVSLIFGQMNEPPGARASVALSGLTVAESFRDAGKEGEKRDILFFIDNIFRFTQAGSEVSALLGRMPSAVGYQPTLATEMGAMQERITSTRKGSITSVQAVYVPADDLTDPAPATTFSHLDATTVLDRKITELGIYPAVDPLASTSRILDPHIVGQEHYDVAQRVKQILQRNKELQDIISILGMEELSEEDKLVVNRARRVQRFLSQPFAVAEQFTGVPGVMVGIEDTIKGFRMILDGEVDNLPEQAFLNVGTIEEAIEKGKKLLEQAKK.

G157–T164 lines the ATP pocket.

The protein belongs to the ATPase alpha/beta chains family. F-type ATPases have 2 components, CF(1) - the catalytic core - and CF(0) - the membrane proton channel. CF(1) has five subunits: alpha(3), beta(3), gamma(1), delta(1), epsilon(1). CF(0) has three main subunits: a(1), b(2) and c(9-12). The alpha and beta chains form an alternating ring which encloses part of the gamma chain. CF(1) is attached to CF(0) by a central stalk formed by the gamma and epsilon chains, while a peripheral stalk is formed by the delta and b chains.

It is found in the cell inner membrane. It carries out the reaction ATP + H2O + 4 H(+)(in) = ADP + phosphate + 5 H(+)(out). In terms of biological role, produces ATP from ADP in the presence of a proton gradient across the membrane. The catalytic sites are hosted primarily by the beta subunits. This Bacteroides thetaiotaomicron (strain ATCC 29148 / DSM 2079 / JCM 5827 / CCUG 10774 / NCTC 10582 / VPI-5482 / E50) protein is ATP synthase subunit beta.